We begin with the raw amino-acid sequence, 704 residues long: Tetratricopeptide repeat protein 12 (704 aa).

The residue at position 71 (Thr-71) is a Phosphothreonine. TPR repeat units lie at residues 105-138, 139-172, and 173-206; these read ADALKEKGNEAFVRGDYETAIFFYSEGLGKLKDM, KVLYTNRAQAFIKLGDYQKALVDCDWALKCDENC, and TKAYFHMGKAHVALKNYSKAKECYQKIEEINPKL.

It localises to the cytoplasm. Cytoplasmic protein that plays a role in the proper assembly of dynein arm complexes in motile cilia in both respiratory cells and sperm flagella. The sequence is that of Tetratricopeptide repeat protein 12 (Ttc12) from Mus musculus (Mouse).